The sequence spans 406 residues: LIM/homeobox protein Lhx2 (406 aa).

2 LIM zinc-binding domains span residues 53 to 105 and 115 to 168; these read CAGC…CKED and CARC…CRLH. The disordered stretch occupies residues 250–270; sequence DAEHLDRDQPYPSSQKTKRMR. The homeobox DNA-binding region spans 266-325; that stretch reads TKRMRTSFKHHQLRTMKSYFAINHNPDAKDLKQLAQKTGLTKRVLQVWFQNARAKFRRNL. The Nuclear localization signal motif lies at 307–323; that stretch reads KRVLQVWFQNARAKFRR. A compositionally biased stretch (polar residues) spans 328–356; it reads QENTGVDKTSDATLQTGTPSGPASELSNA. 2 disordered regions span residues 328-375 and 387-406; these read QENT…SPTL and GNLE…TNLF. Positions 357–375 are enriched in low complexity; that stretch reads SLSPSSTPTTLTDLTSPTL. The segment covering 396-406 has biased composition (polar residues); it reads SPSQTTLTNLF.

In terms of assembly, interacts (via LIM domains) with CITED2. Interacts with POU4F2 isoform 1.

The protein resides in the nucleus. Its function is as follows. Acts as a transcriptional activator. Stimulates the promoter of the alpha-glycoprotein gene. Transcriptional regulatory protein involved in the control of cell differentiation in developing lymphoid and neural cell types. The sequence is that of LIM/homeobox protein Lhx2 (Lhx2) from Mus musculus (Mouse).